Reading from the N-terminus, the 273-residue chain is Urease accessory protein UreD (273 aa).

This sequence belongs to the UreD family. In terms of assembly, ureD, UreF and UreG form a complex that acts as a GTP-hydrolysis-dependent molecular chaperone, activating the urease apoprotein by helping to assemble the nickel containing metallocenter of UreC. The UreE protein probably delivers the nickel.

Its subcellular location is the cytoplasm. In terms of biological role, required for maturation of urease via the functional incorporation of the urease nickel metallocenter. The chain is Urease accessory protein UreD from Rhizobium rhizogenes (strain K84 / ATCC BAA-868) (Agrobacterium radiobacter).